The sequence spans 115 residues: Probable non-functional immunoglobulin heavy variable 3-38-3 (115 aa).

Residues 1–19 form the signal peptide; that stretch reads MQFVLSWVFLVAILKGVQC. Positions 20–44 are framework-1; that stretch reads EVQLVESRGVLVQPGGSLRLSCAAS. One can recognise an Ig-like domain in the interval 31–115; that stretch reads VQPGGSLRLS…EDTAVYYCKK (85 aa). A disulfide bridge links cysteine 41 with cysteine 113. The tract at residues 45 to 52 is complementarity-determining-1; it reads GFTVSSNE. Residues 53–69 form a framework-2 region; sequence MSWVRQAPGKGLEWVSS. The tract at residues 70–75 is complementarity-determining-2; it reads ISGGST. The interval 76-113 is framework-3; sequence YYADSRKGRFTISRDNSKNTLHLQMNSLRAEDTAVYYC. The tract at residues 114–115 is complementarity-determining-3; that stretch reads KK.

In terms of assembly, immunoglobulins are composed of two identical heavy chains and two identical light chains; disulfide-linked.

It is found in the secreted. Its subcellular location is the cell membrane. In terms of biological role, probable non-functional open reading frame (ORF) of V region of the variable domain of immunoglobulin heavy chains. Non-functional ORF generally cannot participate in the synthesis of a productive immunoglobulin chain due to altered V-(D)-J or switch recombination and/or splicing site (at mRNA level) and/or conserved amino acid change (protein level). Immunoglobulins, also known as antibodies, are membrane-bound or secreted glycoproteins produced by B lymphocytes. In the recognition phase of humoral immunity, the membrane-bound immunoglobulins serve as receptors which, upon binding of a specific antigen, trigger the clonal expansion and differentiation of B lymphocytes into immunoglobulins-secreting plasma cells. Secreted immunoglobulins mediate the effector phase of humoral immunity, which results in the elimination of bound antigens. The antigen binding site is formed by the variable domain of one heavy chain, together with that of its associated light chain. Thus, each immunoglobulin has two antigen binding sites with remarkable affinity for a particular antigen. The variable domains are assembled by a process called V-(D)-J rearrangement and can then be subjected to somatic hypermutations which, after exposure to antigen and selection, allow affinity maturation for a particular antigen. This is Probable non-functional immunoglobulin heavy variable 3-38-3 from Homo sapiens (Human).